A 227-amino-acid polypeptide reads, in one-letter code: Heptaprenylglyceryl phosphate synthase (227 aa).

Lys-13 serves as a coordination point for sn-glycerol 1-phosphate. Asp-15 and Thr-41 together coordinate Mg(2+). Residues 159-164, Gly-189, and 209-210 each bind sn-glycerol 1-phosphate; these read YLEYSG and GN.

The protein belongs to the GGGP/HepGP synthase family. Group I subfamily. Homodimer. It depends on Mg(2+) as a cofactor.

The catalysed reaction is sn-glycerol 1-phosphate + all-trans-heptaprenyl diphosphate = 3-heptaprenyl-sn-glycero-1-phosphate + diphosphate. It participates in membrane lipid metabolism; glycerophospholipid metabolism. In terms of biological role, prenyltransferase that catalyzes in vivo the transfer of the heptaprenyl moiety of heptaprenyl pyrophosphate (HepPP; 35 carbon atoms) to the C3 hydroxyl of sn-glycerol-1-phosphate (G1P), producing heptaprenylglyceryl phosphate (HepGP). This reaction is an ether-bond-formation step in the biosynthesis of archaea-type G1P-based membrane lipids found in Bacillales. This is Heptaprenylglyceryl phosphate synthase from Exiguobacterium sibiricum (strain DSM 17290 / CCUG 55495 / CIP 109462 / JCM 13490 / 255-15).